The primary structure comprises 1404 residues: DNA-directed RNA polymerase subunit beta' (1404 aa).

Zn(2+)-binding residues include cysteine 70, cysteine 72, cysteine 85, and cysteine 88. Positions 460, 462, and 464 each coordinate Mg(2+). Residues cysteine 825, cysteine 899, cysteine 906, and cysteine 909 each contribute to the Zn(2+) site.

This sequence belongs to the RNA polymerase beta' chain family. The RNAP catalytic core consists of 2 alpha, 1 beta, 1 beta' and 1 omega subunit. When a sigma factor is associated with the core the holoenzyme is formed, which can initiate transcription. The cofactor is Mg(2+). Zn(2+) serves as cofactor.

The enzyme catalyses RNA(n) + a ribonucleoside 5'-triphosphate = RNA(n+1) + diphosphate. Its function is as follows. DNA-dependent RNA polymerase catalyzes the transcription of DNA into RNA using the four ribonucleoside triphosphates as substrates. The chain is DNA-directed RNA polymerase subunit beta' from Nitrosomonas europaea (strain ATCC 19718 / CIP 103999 / KCTC 2705 / NBRC 14298).